We begin with the raw amino-acid sequence, 220 residues long: Adenylate kinase (220 aa).

Residue 12 to 17 (GAGKGT) coordinates ATP. An NMP region spans residues 32 to 62 (STGDIFRDIVKKENDELGKKIKEIMERGELV). Residues T33, R38, 60–62 (ELV), 88–91 (GYPR), and Q95 contribute to the AMP site. The segment at 129–166 (ARRICPKCGRIYNLISLPPKEDELCDDCKVKLVQREDD) is LID. Residue R130 coordinates ATP. Zn(2+) is bound by residues C133 and C136. ATP is bound at residue 139-140 (IY). Zn(2+) is bound by residues C153 and C156. Residues R163 and R174 each coordinate AMP. I202 is an ATP binding site.

Belongs to the adenylate kinase family. As to quaternary structure, monomer.

It is found in the cytoplasm. The enzyme catalyses AMP + ATP = 2 ADP. Its pathway is purine metabolism; AMP biosynthesis via salvage pathway; AMP from ADP: step 1/1. Catalyzes the reversible transfer of the terminal phosphate group between ATP and AMP. Plays an important role in cellular energy homeostasis and in adenine nucleotide metabolism. The polypeptide is Adenylate kinase (Thermotoga maritima (strain ATCC 43589 / DSM 3109 / JCM 10099 / NBRC 100826 / MSB8)).